A 304-amino-acid polypeptide reads, in one-letter code: Voltage-dependent anion channel-forming protein YneE (304 aa).

4 helical membrane passes run 28–48, 50–70, 209–229, and 235–255; these read LLLN…YTML, IKFT…FLGF, AYTL…PFAL, and YMTP…DALA.

Belongs to the anion channel-forming bestrophin (TC 1.A.46) family.

It localises to the cell membrane. This chain is Voltage-dependent anion channel-forming protein YneE (yneE), found in Salmonella typhi.